The primary structure comprises 1051 residues: Anucleate primary sterigmata protein B (1051 aa).

2 coiled-coil regions span residues 10–200 and 239–285; these read IDRL…YAIA and STLV…ELKL. Basic and acidic residues predominate over residues 58 to 90; the sequence is KDNQGLKRKIRDLEKQLKDQQSDKESMLNHDPE. Disordered regions lie at residues 58 to 100 and 141 to 160; these read KDNQ…DRDH and LKSL…REER. Positions 294–303 are enriched in basic and acidic residues; that stretch reads AGDSILDRSA. Disordered stretches follow at residues 294–329, 877–902, 909–928, and 984–1051; these read AGDS…AERE, NHPR…LAER, NTAA…QMTN, and EERD…DIEV. Over residues 309-321 the composition is skewed to polar residues; the sequence is RPSSSISDRTGQS. Coiled-coil stretches lie at residues 325–743 and 787–878; these read DAER…RNSM and RNLL…LQNH. 2 stretches are compositionally biased toward polar residues: residues 877–897 and 916–928; these read NHPR…SSTI and ARSS…QMTN. A coiled-coil region spans residues 950 to 1004; that stretch reads NQEVWIKRLHELERRLKAEREARLLDRNGARRRLEERDAENKRLRAQLDRQRLRQ. Basic and acidic residues-rich tracts occupy residues 984 to 1001 and 1028 to 1040; these read EERD…DRQR and EGYR…HSSS.

The protein localises to the cytoplasm. Involved in regulation of nuclear migration. May be involved in regulating nuclear positioning. The chain is Anucleate primary sterigmata protein B (apsB) from Emericella nidulans (strain FGSC A4 / ATCC 38163 / CBS 112.46 / NRRL 194 / M139) (Aspergillus nidulans).